Here is a 102-residue protein sequence, read N- to C-terminus: Large ribosomal subunit protein bL21 (102 aa).

Belongs to the bacterial ribosomal protein bL21 family. As to quaternary structure, part of the 50S ribosomal subunit. Contacts protein L20.

Its function is as follows. This protein binds to 23S rRNA in the presence of protein L20. The sequence is that of Large ribosomal subunit protein bL21 from Marinomonas sp. (strain MWYL1).